The following is a 244-amino-acid chain: Kallikrein-6 (244 aa).

The signal sequence occupies residues 1 to 16; that stretch reads MKKLMVVLSLIAAAWA. A propeptide spans 17–21 (activation peptide); that stretch reads EEQNK. Residues 22 to 242 enclose the Peptidase S1 domain; the sequence is LVHGGPCDKT…YTNWIQKTIQ (221 aa). 6 disulfide bridges follow: C28–C157, C47–C63, C131–C231, C138–C203, C168–C182, and C193–C218. Catalysis depends on charge relay system residues H62 and D106. N134 carries an N-linked (GlcNAc...) asparagine glycan. Residue S197 is the Charge relay system of the active site.

In terms of processing, inactivated by autolytic cleavage after Arg-80. As to expression, in fluids, highest levels found in milk of lactating women followed by cerebrospinal fluid, nipple aspirate fluid and breast cyst fluid. Also found in serum, seminal plasma and some amniotic fluids and breast tumor cytosolic extracts. Not detected in urine. At the tissue level, highest concentrations found in glandular tissues such as salivary glands followed by lung, colon, fallopian tube, placenta, breast, pituitary and kidney. Not detected in skin, spleen, bone, thyroid, heart, ureter, liver, muscle, endometrium, testis, pancreas, seminal vesicle, ovary, adrenals and prostate. In brain, detected in gray matter neurons (at protein level). Colocalizes with pathological inclusions such as Lewy bodies and glial cytoplasmic inclusions. Overexpressed in primary breast tumors but not expressed in metastatic tumors.

The protein localises to the secreted. Its subcellular location is the nucleus. It localises to the nucleolus. It is found in the cytoplasm. The protein resides in the mitochondrion. The protein localises to the microsome. With respect to regulation, inhibited by a range of serine protease inhibitors including soybean trypsin inhibitor, benzamidine and serpins. Activated by a range of glycosaminoglycans including chondroitin sulfate, dermatan sulfate, heparan sulfate and heparin. In terms of biological role, serine protease which exhibits a preference for Arg over Lys in the substrate P1 position and for Ser or Pro in the P2 position. Shows activity against amyloid precursor protein, myelin basic protein, gelatin, casein and extracellular matrix proteins such as fibronectin, laminin, vitronectin and collagen. Degrades alpha-synuclein and prevents its polymerization, indicating that it may be involved in the pathogenesis of Parkinson disease and other synucleinopathies. May be involved in regulation of axon outgrowth following spinal cord injury. Tumor cells treated with a neutralizing KLK6 antibody migrate less than control cells, suggesting a role in invasion and metastasis. The polypeptide is Kallikrein-6 (KLK6) (Homo sapiens (Human)).